Reading from the N-terminus, the 200-residue chain is Holliday junction resolvase RecU (200 aa).

Positions 1-25 (MTIRYPNGKRYNQASQPHKTPIKKH) are disordered. Positions 85, 87, 100, and 119 each coordinate Mg(2+).

This sequence belongs to the RecU family. The cofactor is Mg(2+).

It localises to the cytoplasm. The enzyme catalyses Endonucleolytic cleavage at a junction such as a reciprocal single-stranded crossover between two homologous DNA duplexes (Holliday junction).. Its function is as follows. Endonuclease that resolves Holliday junction intermediates in genetic recombination. Cleaves mobile four-strand junctions by introducing symmetrical nicks in paired strands. Promotes annealing of linear ssDNA with homologous dsDNA. Required for DNA repair, homologous recombination and chromosome segregation. The polypeptide is Holliday junction resolvase RecU (Bacillus cereus (strain ZK / E33L)).